The sequence spans 768 residues: Valine--tRNA ligase (768 aa).

The 'HIGH' region signature appears at 37–47; it reads PTVSGKMHMGH. A 'KMSKS' region motif is present at residues 510–514; the sequence is KMSKS. Position 513 (Lys513) interacts with ATP.

The protein belongs to the class-I aminoacyl-tRNA synthetase family. ValS type 2 subfamily.

It is found in the cytoplasm. The enzyme catalyses tRNA(Val) + L-valine + ATP = L-valyl-tRNA(Val) + AMP + diphosphate. In terms of biological role, catalyzes the attachment of valine to tRNA(Val). As ValRS can inadvertently accommodate and process structurally similar amino acids such as threonine, to avoid such errors, it has a 'posttransfer' editing activity that hydrolyzes mischarged Thr-tRNA(Val) in a tRNA-dependent manner. The sequence is that of Valine--tRNA ligase from Picrophilus torridus (strain ATCC 700027 / DSM 9790 / JCM 10055 / NBRC 100828 / KAW 2/3).